Consider the following 120-residue polypeptide: NAD(P)H-quinone oxidoreductase subunit 3, chloroplastic (120 aa).

Helical transmembrane passes span I9 to G29, M64 to M84, and V88 to L108.

Belongs to the complex I subunit 3 family. NDH is composed of at least 16 different subunits, 5 of which are encoded in the nucleus.

The protein localises to the plastid. Its subcellular location is the chloroplast thylakoid membrane. The enzyme catalyses a plastoquinone + NADH + (n+1) H(+)(in) = a plastoquinol + NAD(+) + n H(+)(out). The catalysed reaction is a plastoquinone + NADPH + (n+1) H(+)(in) = a plastoquinol + NADP(+) + n H(+)(out). Its function is as follows. NDH shuttles electrons from NAD(P)H:plastoquinone, via FMN and iron-sulfur (Fe-S) centers, to quinones in the photosynthetic chain and possibly in a chloroplast respiratory chain. The immediate electron acceptor for the enzyme in this species is believed to be plastoquinone. Couples the redox reaction to proton translocation, and thus conserves the redox energy in a proton gradient. The sequence is that of NAD(P)H-quinone oxidoreductase subunit 3, chloroplastic from Daucus carota (Wild carrot).